The primary structure comprises 203 residues: Small ribosomal subunit protein uS4 (203 aa).

The S4 RNA-binding domain maps to 93–156; that stretch reads RRLDNVVYRL…LKVPAILEAV (64 aa).

Belongs to the universal ribosomal protein uS4 family. In terms of assembly, part of the 30S ribosomal subunit. Contacts protein S5. The interaction surface between S4 and S5 is involved in control of translational fidelity.

Its function is as follows. One of the primary rRNA binding proteins, it binds directly to 16S rRNA where it nucleates assembly of the body of the 30S subunit. In terms of biological role, with S5 and S12 plays an important role in translational accuracy. In Streptococcus gordonii (strain Challis / ATCC 35105 / BCRC 15272 / CH1 / DL1 / V288), this protein is Small ribosomal subunit protein uS4.